We begin with the raw amino-acid sequence, 495 residues long: UDP-glycosyltransferase 73C9 (495 aa).

23 to 26 serves as a coordination point for UDP-alpha-D-glucose; the sequence is GHMI. His24 (proton acceptor) is an active-site residue. Asp129 functions as the Charge relay in the catalytic mechanism. Residues 355 to 358, 373 to 381, and 397 to 398 contribute to the UDP-alpha-D-glucose site; these read WSPQ, HCGWNSTLE, and DQ.

This sequence belongs to the UDP-glycosyltransferase family.

Its function is as follows. Possesses very weak glucosyltransferase activity toward 2,4,5-trichlorophenol (TCP), when assayed with high concentrations of TCP. The chain is UDP-glycosyltransferase 73C9 from Barbarea vulgaris (Yellow rocket).